We begin with the raw amino-acid sequence, 299 residues long: Homoserine kinase (299 aa).

85–95 (PMSRGLGSSAT) is a binding site for ATP.

It belongs to the GHMP kinase family. Homoserine kinase subfamily.

It is found in the cytoplasm. The enzyme catalyses L-homoserine + ATP = O-phospho-L-homoserine + ADP + H(+). The protein operates within amino-acid biosynthesis; L-threonine biosynthesis; L-threonine from L-aspartate: step 4/5. Functionally, catalyzes the ATP-dependent phosphorylation of L-homoserine to L-homoserine phosphate. This chain is Homoserine kinase, found in Clostridium novyi (strain NT).